The primary structure comprises 433 residues: 3-phosphoshikimate 1-carboxyvinyltransferase (433 aa).

K21, S22, and R26 together coordinate 3-phosphoshikimate. K21 contacts phosphoenolpyruvate. Positions 96 and 124 each coordinate phosphoenolpyruvate. Residues S167, S168, Q169, S195, D310, and K337 each coordinate 3-phosphoshikimate. Residue Q169 participates in phosphoenolpyruvate binding. D310 serves as the catalytic Proton acceptor. The phosphoenolpyruvate site is built by R341, R384, and K410.

Belongs to the EPSP synthase family. Monomer.

The protein localises to the cytoplasm. The catalysed reaction is 3-phosphoshikimate + phosphoenolpyruvate = 5-O-(1-carboxyvinyl)-3-phosphoshikimate + phosphate. It functions in the pathway metabolic intermediate biosynthesis; chorismate biosynthesis; chorismate from D-erythrose 4-phosphate and phosphoenolpyruvate: step 6/7. Functionally, catalyzes the transfer of the enolpyruvyl moiety of phosphoenolpyruvate (PEP) to the 5-hydroxyl of shikimate-3-phosphate (S3P) to produce enolpyruvyl shikimate-3-phosphate and inorganic phosphate. This Clostridium botulinum (strain Eklund 17B / Type B) protein is 3-phosphoshikimate 1-carboxyvinyltransferase.